The following is a 1561-amino-acid chain: MTPACPLLLSVILSLRLATAFDPAPSACSALASGVLYGAFSLQDLFPTIASGCSWTLENPDPTKYSLYLRFNRQEQVCTHFAPRLLPLDHYLVNFTCLRPGPEEATARAESEVGRPEEEEEEAAAAASGLELCGGSGPFTFLHFDKNFVQLCLSAEPSEAPRLLAPAALAFRFVEVLLINNNNSSQFTCGVLCRWSEECGRAAGRACGFAQPGCSCPGEAGANPATTTSPGPPVAHTLSNALVPGGPAPPAEADLHSGSSNDLFTTEMRYGEEPEEEPKVKTQWPRSADEPGLYMAQTGDPAAEEWSPWSVCSLTCGQGLQVRTRSCVSSPYGTLCSGPLRETRPCNNSATCPVHGVWEEWGSWSLCSRSCGRGSRSRMRTCVPPQHGGKACEGPELQTKLCSMAACPVEGQWLEWGPWGPCSSSCANGTQQRSRKCSVAGPAWATCAGALTDTRECSNLDCPATDGKWGPWNAWSLCSKTCDTGWQRRFRMCQASGTQGYPCEGTGEEVKPCSEKRCPAFHEMCRDEYVMLMTWKRAAAGEIIYNKCPPNASGSASRRCLLSAQGVAYWGLPSFARCISHEYRYLYLSLREHLAKGQRMLAGEGMSQVVRSLQELLARRTYYSGDLLFSVDILRNVTDTFKRATYVPSADDVQRFFQVVSFMVDSENKDKWDDAQQVSPGSVHLLRVVEDFIHLVGDALKAFQSSLIVTDNLVISIQREPISAVSSDITFPMRGRRGMKDWVRHSEDRLFLPKEVLSLSSPGKPATPGAATAGSPGRGRGPGTVPPGPGHAHQRLLPADPEESSSYFVIGAVLYRTLGLILPPPRPPLAVTSRVMTVTVRPPTQPPAEPLITVELSYIINGTTDPHCASWDYSRADTNSGDWNTESCQTLETQAAHTRCQCQHLSTFAVLAQPPKDLTLELAGAPSVPLVIGCAVSCMALLTLLAIYAAFWRFIKSERSIILLNFCLSILASNILILVGQSRVLSKGVCTMTAAFLHFFFLSSFCWVLTEAWQSYLAVIGRMRTRLVRKRFLCLGWGLPALVVAVSVGFTRTKGYGTSSYCWLSLEGGLLYAFVGPAAVIVLVNMLIGIIVFNKLMARDGVSDKSKKQRAGSERCPWASLLLPCSACGAVPSPLLSSASARNAMASLWSSCVVLPLLALTWMSAVLAMTDRRSVLFQALFAVFNSAQGFVITAVHCFLRREVQDVVKCQMGVCRADESEDSPDSCKNGQLQILSDFEKDVDLACQTVLFKEVNTCNPSTITGTLSRLSLDEDEEPKSCLVGPEGGLSFSPLPGNILVPMAASPGLGEPPPPQETNPVYMCGEGGLRQLDLTWIRQSEPGSEGDYMVLPRRTLSLQPGGGGTAGEEAPRARPEGTPRRAAKTVAHTEGYPSFLSVEHSGLGLGPAYGSLQNPYGMTFQPPPPTPSARQVPEPGERSRTMPRTVPGSTMKLGSLERKKLRYSDLDFEKVMHTRKRHSELYHELNQKFHTFDRYRSQSSAKEKPSPPGGRPGLSQHRRHQSWSTFKSMTLGSLPPKPRERLALHRTAAWEPTEPPDGDFQTEV.

The N-terminal stretch at 1–20 (MTPACPLLLSVILSLRLATA) is a signal peptide. Residues 21 to 930 (FDPAPSACSA…ELAGAPSVPL (910 aa)) are Extracellular-facing. 3 N-linked (GlcNAc...) asparagine glycosylation sites follow: asparagine 94, asparagine 182, and asparagine 183. O-linked (Xyl...) (chondroitin sulfate) serine glycosylation occurs at serine 257. 4 TSP type-1 domains span residues 300 to 353 (DPAA…ATCP), 355 to 408 (HGVW…AACP), 410 to 463 (EGQW…LDCP), and 466 to 519 (DGKW…KRCP). Cystine bridges form between cysteine 312–cysteine 346, cysteine 316–cysteine 352, cysteine 327–cysteine 336, cysteine 367–cysteine 402, cysteine 371–cysteine 407, cysteine 382–cysteine 392, cysteine 422–cysteine 457, cysteine 426–cysteine 462, cysteine 437–cysteine 447, cysteine 478–cysteine 513, cysteine 482–cysteine 518, cysteine 493–cysteine 503, cysteine 525–cysteine 560, and cysteine 548–cysteine 578. An N-linked (GlcNAc...) asparagine glycan is attached at asparagine 347. Asparagine 428 is a glycosylation site (N-linked (GlcNAc...) asparagine). N-linked (GlcNAc...) asparagine glycosylation is found at asparagine 551 and asparagine 636. The GAIN-B domain maps to 748 to 918 (DRLFLPKEVL…AVLAQPPKDL (171 aa)). Residues 757–797 (LSLSSPGKPATPGAATAGSPGRGRGPGTVPPGPGHAHQRLL) are disordered. Residues 760-775 (SSPGKPATPGAATAGS) are compositionally biased toward low complexity. Residue asparagine 861 is glycosylated (N-linked (GlcNAc...) asparagine). 2 cysteine pairs are disulfide-bonded: cysteine 868–cysteine 900 and cysteine 888–cysteine 902. The segment at 868–918 (CASWDYSRADTNSGDWNTESCQTLETQAAHTRCQCQHLSTFAVLAQPPKDL) is GPS. The chain crosses the membrane as a helical span at residues 931-951 (VIGCAVSCMALLTLLAIYAAF). Residues 952 to 959 (WRFIKSER) lie on the Cytoplasmic side of the membrane. The chain crosses the membrane as a helical span at residues 960-980 (SIILLNFCLSILASNILILVG). The Extracellular segment spans residues 981-988 (QSRVLSKG). A helical transmembrane segment spans residues 989–1009 (VCTMTAAFLHFFFLSSFCWVL). Residues 1010-1030 (TEAWQSYLAVIGRMRTRLVRK) are Cytoplasmic-facing. The helical transmembrane segment at 1031 to 1051 (RFLCLGWGLPALVVAVSVGFT) threads the bilayer. The Extracellular portion of the chain corresponds to 1052-1072 (RTKGYGTSSYCWLSLEGGLLY). A helical membrane pass occupies residues 1073-1093 (AFVGPAAVIVLVNMLIGIIVF). Residues 1094–1115 (NKLMARDGVSDKSKKQRAGSER) are Cytoplasmic-facing. A helical membrane pass occupies residues 1116–1136 (CPWASLLLPCSACGAVPSPLL). Residues 1137-1147 (SSASARNAMAS) lie on the Extracellular side of the membrane. The helical transmembrane segment at 1148–1168 (LWSSCVVLPLLALTWMSAVLA) threads the bilayer. At 1169–1561 (MTDRRSVLFQ…PPDGDFQTEV (393 aa)) the chain is on the cytoplasmic side. Residue tyrosine 1345 is modified to Phosphotyrosine. Disordered regions lie at residues 1355-1377 (LQPGGGGTAGEEAPRARPEGTPR), 1417-1447 (FQPPPPTPSARQVPEPGERSRTMPRTVPGST), and 1491-1561 (RYRS…QTEV). Basic and acidic residues predominate over residues 1366-1376 (EAPRARPEGTP). Basic and acidic residues predominate over residues 1491–1502 (RYRSQSSAKEKP). The segment covering 1519–1528 (SWSTFKSMTL) has biased composition (polar residues). Residues 1551 to 1561 (EPPDGDFQTEV) are compositionally biased toward acidic residues.

Belongs to the G-protein coupled receptor 2 family. Adhesion G-protein coupled receptor (ADGR) subfamily. Heterodimer of 2 chains generated by proteolytic processing; the large extracellular N-terminal fragment and the membrane-bound C-terminal fragment predominantly remain associated and non-covalently linked. Interacts with GABPB2. Interacts (via carboxy-terminus) with TAX1BP3. Interacts with GNAZ. Interacts with SH3GL2. In terms of processing, glycosylated. Post-translationally, autoproteolytically processed at the GPS region of the GAIN-B domain; this cleavage modulates receptor activity. Additionally, furin is involved in the cleavage at another site, in the middle of the extracellular domain, generating a soluble fragment. As to expression, specifically expressed in the brain. The peak level in the brain is observed 10 days after birth.

Its subcellular location is the cell membrane. It is found in the secreted. Its activity is regulated as follows. Receptor activity is regulated by proteolytic processing. The long N-terminal has a an inhibitory effect on the constitutive signaling activity. Removal of the N-terminal region induces an increase of the receptor activity. Functionally, orphan G-protein coupled receptor involved in cell adhesion and probably in cell-cell interactions. Activates NFAT-signaling pathway, a transcription factor, via the G-protein GNAZ. Involved in angiogenesis inhibition. In Mus musculus (Mouse), this protein is Adhesion G protein-coupled receptor B2 (Adgrb2).